We begin with the raw amino-acid sequence, 956 residues long: MDKEKIVIQGARAHNLKNIDVEIPRDKLVVMTGLSGSGKSSLAFDTIYAEGQRRYVESLSAYARQFLGQMDKPDVDLIEGLSPAISIDQKTTSRNPRSTVGTVTEIHDYLRLLYARVGHPVCPNHGIEITSQTIEQMVDRVLEYPEKTRIQIMAPIVSGKKGTHKKTIEEIKKEGYVRIRVDGEIYDINDEIEIEKNKKHSIEIIIDRIVIKEGINTRLYDSIEAALRLADGYAVVDIMGDKELLFSEHYACPYCGFSVGELEPRMFSFNSPFGACPTCDGLGTKLEVDVDTVIPDRSLSLNEGAIIPWRPISSQYYPQMLASACKEFGIDMDTPLEKLTKEELDIILNGSKDKEFYFEYKNDFGMTRETWIPFEGILPNIERRYRETNSDFTRDQMAQYMTDLPCPSCKGYRLKEETLSVKVNNHHIGQISEFSINEALDFFDGLELSEKETQIAAPIFKEVRARLGFLKNVGLDYLTMSRAAGTLSGGEAQRIRLATQIGSRLTGVLYILDEPSIGLHQRDNDRLISTLQSMRDIGNTLIVVEHDEDTMMAADYLIDIGPGAGEHGGRIVAAGTPEEVAKNKNSITGDYLSGKKFIPVPAKRRKGNGLELEIIGAKANNLKNVNAKIPLATFSCVTGVSGSGKSSLVNEVLRKALARKLNRNHAKPGEHKEIKGIENLEKIINIDQSPIGRTPRSNPATYTGAFDDIRDLFASTNEAKVRGYKKGRFSFNVKGGRCEACKGDGIIKIEMHFLPDVYVPCEVCHGKRYNGETLDIRYKGKNIAEVLEMTVEEGLEYFTNQPRIARKLQTIVDVGLGYIRLGQPATTLSGGEAQRVKLASELHKRSNGKSFYILDEPTTGLHADDIGRLLKVLQRLVEENGDTVLVIEHNLDVIKQADYLIDLGPEGGDGGGQIIATGTPEKIARSKKSYTGKYLKPILERDKERTEERIATAKKK.

Residue 33-40 (GLSGSGKS) coordinates ATP. The segment at 252–279 (CPYCGFSVGELEPRMFSFNSPFGACPTC) adopts a C4-type zinc-finger fold. 2 consecutive ABC transporter domains span residues 309–587 (WRPI…KNSI) and 607–936 (GNGL…KYLK). An ATP-binding site is contributed by 639 to 646 (GVSGSGKS). The segment at 738–764 (CEACKGDGIIKIEMHFLPDVYVPCEVC) adopts a C4-type zinc-finger fold.

It belongs to the ABC transporter superfamily. UvrA family. In terms of assembly, forms a heterotetramer with UvrB during the search for lesions.

The protein localises to the cytoplasm. Functionally, the UvrABC repair system catalyzes the recognition and processing of DNA lesions. UvrA is an ATPase and a DNA-binding protein. A damage recognition complex composed of 2 UvrA and 2 UvrB subunits scans DNA for abnormalities. When the presence of a lesion has been verified by UvrB, the UvrA molecules dissociate. The protein is UvrABC system protein A of Listeria monocytogenes serotype 4b (strain F2365).